Here is a 94-residue protein sequence, read N- to C-terminus: Co-chaperonin GroES (94 aa).

It belongs to the GroES chaperonin family. Heptamer of 7 subunits arranged in a ring. Interacts with the chaperonin GroEL.

The protein localises to the cytoplasm. In terms of biological role, together with the chaperonin GroEL, plays an essential role in assisting protein folding. The GroEL-GroES system forms a nano-cage that allows encapsulation of the non-native substrate proteins and provides a physical environment optimized to promote and accelerate protein folding. GroES binds to the apical surface of the GroEL ring, thereby capping the opening of the GroEL channel. In Staphylococcus epidermidis, this protein is Co-chaperonin GroES.